The chain runs to 332 residues: MRNISMATLALTTVLSTGLFAADDLPGKGITVKPVQSTISEETFQTLLVSKALEKLGYTVDKPSEVDYNVGYTSIANGDATFTAVNWQPLHDDMYQAAGGDAKFYRQGVYVSGAAQGYLIDKKTAERYHITRLDQLKDPKLAKLFDTNGDGKADLTGCNPGWGCDSVINHQIQAYGLGDTVNHNQGNYAALIADTIARYKQGKSVIFFTWTPYWVSDVLVPGRDVVWLQVPFSSLPGKQKGTDTKLPNGANYGFPVNNMRIVANKDWAEKNPAAAKLFAIMKLPLADINAQNLRMHQGEASQQDIERHVNGWINAHQAQFDGWLNAARAAAK.

The first 21 residues, 1–21 (MRNISMATLALTTVLSTGLFA), serve as a signal peptide directing secretion.

The complex is composed of two ATP-binding proteins (OusV), two transmembrane proteins (OusW) and a solute-binding protein (OusX).

It localises to the periplasm. Its function is as follows. Part of the OusB ABC transporter complex involved in glycine betaine and choline uptake. Binds glycine betaine. The chain is Glycine betaine-binding periplasmic protein OusX from Dickeya dadantii (strain 3937) (Erwinia chrysanthemi (strain 3937)).